A 525-amino-acid polypeptide reads, in one-letter code: COP9 signalosome complex subunit 1b (525 aa).

The PCI domain occupies 298 to 460 (HFLNANFDHC…KILFAKEADQ (163 aa)).

It belongs to the CSN1 family. As to quaternary structure, component of the CSN complex, probably composed of CSN1b, alien/CSN2, CSN3, CSN4, CSN5, CSN6, CSN7 and CSN8.

It localises to the cytoplasm. The protein resides in the nucleus. Essential component of the COP9 signalosome complex (CSN), a complex involved in various cellular and developmental processes. The CSN complex is an essential regulator of the ubiquitin (Ubl) conjugation pathway by mediating the deneddylation of the cullin subunits of the SCF-type E3 ligase complexes, leading to decrease the Ubl ligase activity of SCF. The CSN complex plays an essential role in oogenesis and embryogenesis and is required for proper photoreceptor R cell differentiation and promote lamina glial cell migration or axon targeting. It also promotes Ubl-dependent degradation of cyclin E (CycE) during early oogenesis. In Drosophila melanogaster (Fruit fly), this protein is COP9 signalosome complex subunit 1b (CSN1b).